We begin with the raw amino-acid sequence, 347 residues long: Putative coenzyme F420-dependent oxidoreductase Rv3520c (347 aa).

The protein is Putative coenzyme F420-dependent oxidoreductase Rv3520c of Mycobacterium tuberculosis (strain ATCC 25618 / H37Rv).